Here is a 193-residue protein sequence, read N- to C-terminus: dCTP deaminase (193 aa).

Residues 110–115 (RSSLAR), aspartate 128, 136–138 (VLE), tyrosine 171, lysine 178, and glutamine 182 contribute to the dCTP site. Catalysis depends on glutamate 138, which acts as the Proton donor/acceptor.

The protein belongs to the dCTP deaminase family. As to quaternary structure, homotrimer.

The catalysed reaction is dCTP + H2O + H(+) = dUTP + NH4(+). Its pathway is pyrimidine metabolism; dUMP biosynthesis; dUMP from dCTP (dUTP route): step 1/2. Catalyzes the deamination of dCTP to dUTP. This chain is dCTP deaminase, found in Aeromonas hydrophila subsp. hydrophila (strain ATCC 7966 / DSM 30187 / BCRC 13018 / CCUG 14551 / JCM 1027 / KCTC 2358 / NCIMB 9240 / NCTC 8049).